Consider the following 239-residue polypeptide: Claudin-14 (239 aa).

At 1 to 7 (MASTAVQ) the chain is on the cytoplasmic side. A helical transmembrane segment spans residues 8-28 (LLGFLLSFLGMVGTLITTILP). Residues 29–81 (HWRRTAHVGTNILTAVSYLKGLWMECVWHSTGIYQCQIYRSLLALPRDLQAAR) are Extracellular-facing. Residues 82-102 (ALMVISCLLSGMACACAVVGM) form a helical membrane-spanning segment. Over 103–115 (KCTRCAKGTPAKT) the chain is Cytoplasmic. A helical transmembrane segment spans residues 116-136 (TFAVLGGALFLLAGLLCMVAV). At 137 to 162 (SWTTNDVVQNFYNPLLPSGMKFEIGQ) the chain is on the extracellular side. The helical transmembrane segment at 163–183 (ALYLGFISSSLSLIGGTLLCL) threads the bilayer. Topologically, residues 184–239 (SCQDEAPYRPYPPQSRAGATTTATAPAYRPPAAYKDNRAPSVTSAAHSGYRLNDYV) are cytoplasmic.

Belongs to the claudin family. Expressed in all sensory epithelia of the inner ear vestibular organs, as well as in liver and kidney.

The protein resides in the cell junction. Its subcellular location is the tight junction. It localises to the cell membrane. Functionally, plays a major role in tight junction-specific obliteration of the intercellular space, through calcium-independent cell-adhesion activity. This Mus musculus (Mouse) protein is Claudin-14 (Cldn14).